Here is a 265-residue protein sequence, read N- to C-terminus: Tryptophan synthase alpha chain (265 aa).

Residues E41 and D52 each act as proton acceptor in the active site.

Belongs to the TrpA family. Tetramer of two alpha and two beta chains.

It catalyses the reaction (1S,2R)-1-C-(indol-3-yl)glycerol 3-phosphate + L-serine = D-glyceraldehyde 3-phosphate + L-tryptophan + H2O. It functions in the pathway amino-acid biosynthesis; L-tryptophan biosynthesis; L-tryptophan from chorismate: step 5/5. The alpha subunit is responsible for the aldol cleavage of indoleglycerol phosphate to indole and glyceraldehyde 3-phosphate. The protein is Tryptophan synthase alpha chain of Bacillus velezensis (strain DSM 23117 / BGSC 10A6 / LMG 26770 / FZB42) (Bacillus amyloliquefaciens subsp. plantarum).